The following is a 184-amino-acid chain: MREYKLVVLGSGGVGKSALTVQFVQGIFVEKYDPTIEDSYRKQVEVDAQQCMLEILDTAGTEQFTAMRDLYMKNGQGFALVYSITAQSTFNDLQDLREQILRVKDTDDVPMILVGNKCDLEDERVVGKEQGQNLARQWSNCAFLESSAKSKINVNEIFYDLVRQINRKTPVPGKARKKSSCQLL.

A GTP-binding site is contributed by 10–18 (GSGGVGKSA). The interval 25-67 (QGIFVEKYDPTIEDSYRKQVEVDAQQCMLEILDTAGTEQFTAM) is interaction with KRIT1. An Effector region motif is present at residues 32-40 (YDPTIEDSY). ADP-ribosylserine; by botulinum toxin is present on S39. GTP contacts are provided by residues 57 to 61 (DTAGT), 116 to 119 (NKCD), and 147 to 149 (SAK). S179 bears the Phosphoserine; by PKA mark. C181 carries the cysteine methyl ester modification. A lipid anchor (S-geranylgeranyl cysteine) is attached at C181. The propeptide at 182 to 184 (QLL) is removed in mature form.

It belongs to the small GTPase superfamily. Ras family. In terms of assembly, heterodimer with RAP1GAP. Interacts with EPAC2. Interacts with SGSM1. Interacts with SGSM2. Interacts with SGSM3. Interacts with KRIT1. Interacts with RAP1GDS1.

It localises to the cell membrane. It is found in the cytoplasm. The protein localises to the cytosol. The protein resides in the cell junction. It carries out the reaction GTP + H2O = GDP + phosphate + H(+). With respect to regulation, activated by guanine nucleotide-exchange factor (GEF) EPAC2 in a cAMP-dependent manner. In terms of biological role, GTP-binding protein that possesses intrinsic GTPase activity. Contributes to the polarizing activity of KRIT1 and CDH5 in the establishment and maintenance of correct endothelial cell polarity and vascular lumen. Required for the localization of phosphorylated PRKCZ, PARD3 and TIAM1 to the cell junction. Plays a role in the establishment of basal endothelial barrier function. This is Ras-related protein Rap-1b (Rap1b) from Rattus norvegicus (Rat).